The following is a 192-amino-acid chain: METHDLTLDDFLSRFQLLRPKMSRDVLNRRQAAVLIPLVRREQPGLLLTKRASHMRKHPGQVAFPGGAVDSTDASLIAAALREAHEEVAIPPEVVEIIGVLPPVDSVTGFQVTPVVGIIPPDLHYHASEEEVAAVFEMPLSEALRLSRYHPLDIQRRGHDHRVWLSWYQHYFVWGMTAGIIRELALQIGMKP.

Positions 29–160 constitute a Nudix hydrolase domain; the sequence is RRQAAVLIPL…PLDIQRRGHD (132 aa). A Nudix box motif is present at residues 67–89; sequence GAVDSTDASLIAAALREAHEEVA. Mg(2+) contacts are provided by glutamate 83 and glutamate 87.

It belongs to the Nudix hydrolase family. PCD1 subfamily. Requires Mn(2+) as cofactor. Mg(2+) serves as cofactor.

Probably mediates the hydrolysis of some nucleoside diphosphate derivatives. This is an uncharacterized protein from Enterobacter sp. (strain 638).